The sequence spans 362 residues: UDP-N-acetylglucosamine--N-acetylmuramyl-(pentapeptide) pyrophosphoryl-undecaprenol N-acetylglucosamine transferase (362 aa).

Residues Arg-166, Ser-196, and Gln-290 each coordinate UDP-N-acetyl-alpha-D-glucosamine.

It belongs to the glycosyltransferase 28 family. MurG subfamily.

The protein resides in the cell membrane. The enzyme catalyses Mur2Ac(oyl-L-Ala-gamma-D-Glu-L-Lys-D-Ala-D-Ala)-di-trans,octa-cis-undecaprenyl diphosphate + UDP-N-acetyl-alpha-D-glucosamine = beta-D-GlcNAc-(1-&gt;4)-Mur2Ac(oyl-L-Ala-gamma-D-Glu-L-Lys-D-Ala-D-Ala)-di-trans,octa-cis-undecaprenyl diphosphate + UDP + H(+). Its pathway is cell wall biogenesis; peptidoglycan biosynthesis. Functionally, cell wall formation. Catalyzes the transfer of a GlcNAc subunit on undecaprenyl-pyrophosphoryl-MurNAc-pentapeptide (lipid intermediate I) to form undecaprenyl-pyrophosphoryl-MurNAc-(pentapeptide)GlcNAc (lipid intermediate II). The sequence is that of UDP-N-acetylglucosamine--N-acetylmuramyl-(pentapeptide) pyrophosphoryl-undecaprenol N-acetylglucosamine transferase from Staphylococcus carnosus (strain TM300).